Reading from the N-terminus, the 360-residue chain is Squamosa promoter-binding-like protein 7 (360 aa).

Over residues 74–89 the composition is skewed to gly residues; that stretch reads AQGSGGGGGGGGGGSA. Residues 74–98 form a disordered region; the sequence is AQGSGGGGGGGGGGSADQGKRKEKA. The segment at 105 to 182 adopts an SBP-type zinc-finger fold; the sequence is VPRCQVEGCD…AGHNERRRRS (78 aa). Cys108, Cys113, Cys130, His133, Cys149, Cys152, His156, and Cys168 together coordinate Zn(2+). The Bipartite nuclear localization signal motif lies at 165–181; sequence KKSCRRRLAGHNERRRR. Residues 172–182 show a composition bias toward basic residues; it reads LAGHNERRRRS. Disordered regions lie at residues 172 to 196, 261 to 306, and 320 to 360; these read LAGH…AHPH, FFSD…HEHQ, and AAGG…ARVV.

In terms of tissue distribution, expressed in young panicles.

The protein localises to the nucleus. Trans-acting factor that binds specifically to the consensus nucleotide sequence 5'-TNCGTACAA-3'. May be involved in panicle development. The sequence is that of Squamosa promoter-binding-like protein 7 (SPL7) from Oryza sativa subsp. indica (Rice).